A 142-amino-acid chain; its full sequence is Peptide methionine sulfoxide reductase MsrB (142 aa).

The region spanning 2–125 (LKKDKSELTD…NSAAIQFIPY (124 aa)) is the MsrB domain. The Nucleophile role is filled by cysteine 114.

This sequence belongs to the MsrB Met sulfoxide reductase family.

It catalyses the reaction L-methionyl-[protein] + [thioredoxin]-disulfide + H2O = L-methionyl-(R)-S-oxide-[protein] + [thioredoxin]-dithiol. The chain is Peptide methionine sulfoxide reductase MsrB from Staphylococcus aureus (strain bovine RF122 / ET3-1).